Here is a 128-residue protein sequence, read N- to C-terminus: Fluoride-specific ion channel FluC (128 aa).

4 consecutive transmembrane segments (helical) span residues 4–24, 39–59, 71–91, and 99–119; these read LLLALIVGLGGFLGASLRYLI, GTLIANILGALLIGFIMEFSM, FLTTGIMGGLTTFSTFSYETI, and MTLGIENIILNLGCSLLFVVI. Na(+) contacts are provided by glycine 78 and threonine 81.

This sequence belongs to the fluoride channel Fluc/FEX (TC 1.A.43) family.

The protein localises to the cell membrane. It catalyses the reaction fluoride(in) = fluoride(out). With respect to regulation, na(+) is not transported, but it plays an essential structural role and its presence is essential for fluoride channel function. Functionally, fluoride-specific ion channel. Important for reducing fluoride concentration in the cell, thus reducing its toxicity. The protein is Fluoride-specific ion channel FluC of Clostridium perfringens (strain 13 / Type A).